The primary structure comprises 197 residues: MEPFTTHTGRAVPLRRSNVDTDQIIPAVYLKRVSRTGFADGLFAAWRQDPGFVLNRPEFAGADILVAGPDFGTGSSREHAVWALQDYGFRVVISPRFGDIFRNNALKGGLLAVVLPESDVEALWDVVESDPATPVTVDLVTREVRYADVVRGFDIDDYTRWRLMEGLDDIGLTLRHADAIDAFEARRPAWKPTTRAS.

The protein belongs to the LeuD family. LeuD type 1 subfamily. In terms of assembly, heterodimer of LeuC and LeuD.

It catalyses the reaction (2R,3S)-3-isopropylmalate = (2S)-2-isopropylmalate. The protein operates within amino-acid biosynthesis; L-leucine biosynthesis; L-leucine from 3-methyl-2-oxobutanoate: step 2/4. Its function is as follows. Catalyzes the isomerization between 2-isopropylmalate and 3-isopropylmalate, via the formation of 2-isopropylmaleate. In Acidothermus cellulolyticus (strain ATCC 43068 / DSM 8971 / 11B), this protein is 3-isopropylmalate dehydratase small subunit.